A 223-amino-acid polypeptide reads, in one-letter code: Putative 3-methyladenine DNA glycosylase (223 aa).

This sequence belongs to the DNA glycosylase MPG family.

This chain is Putative 3-methyladenine DNA glycosylase, found in Pseudomonas syringae pv. tomato (strain ATCC BAA-871 / DC3000).